The following is a 673-amino-acid chain: Potassium voltage-gated channel subfamily KQT member 1 (673 aa).

Disordered regions lie at residues 1–28 and 61–80; these read MAAA…RGSA and GPSS…LGPR. Residues 1–118 lie on the Cytoplasmic side of the membrane; the sequence is MAAATSPPRA…YNFLERPTGW (118 aa). Phosphoserine is present on S27. Over residues 66–75 the composition is skewed to low complexity; it reads AAPAASPAAA. The helical transmembrane segment at 119–140 threads the bilayer; sequence KCFVYHFAVFLIVLVCLIFSVL. Residues 141-151 lie on the Extracellular side of the membrane; sequence STIEQYVALAT. Residues 152–174 traverse the membrane as a helical segment; that stretch reads GTLFWMEIVLVVFFGTEYAVRLW. At 175–190 the chain is on the cytoplasmic side; sequence SAGCRSKYVGIWGRLR. Residues 191–216 form a helical membrane-spanning segment; that stretch reads FARKPISIIDLIVVVASMVVLCVGSK. The Extracellular segment spans residues 217-224; the sequence is GQVFATSA. The helical; Voltage-sensor transmembrane segment at 225–240 threads the bilayer; the sequence is IRGIRFLQILRMLHVD. Residues 236–244 form an interaction with KCNE3 region; the sequence is MLHVDRQGG. Over 241–258 the chain is Cytoplasmic; it reads RQGGTWRLLGSVVFIHRQ. Q242 provides a ligand contact to a 1,2-diacyl-sn-glycero-3-phospho-(1D-myo-inositol-4,5-bisphosphate). A helical transmembrane segment spans residues 259-281; sequence ELITTLYIGFLGLIFSSYFVYLA. Topologically, residues 282 to 297 are extracellular; that stretch reads EKDAVNESGQVEFGSY. A glycan (N-linked (GlcNAc...) asparagine) is linked at N287. Residues 298–318 constitute an intramembrane region (pore-forming); sequence ADALWWGVVTVTTIGYGDKVP. The Extracellular portion of the chain corresponds to 319–320; it reads QT. Residues 321-346 traverse the membrane as a helical segment; the sequence is WVGKTIASCFSVFAISFFALPAGILG. Topologically, residues 347–673 are cytoplasmic; the sequence is SGFALKVQQK…VPGRGPEEGS (327 aa). Positions 368–380 are interaction with CALM; it reads AAASLIQTAWRCY. A phosphoserine mark is found at S405 and S407. The interval 514–528 is interaction with CALM; calcium-dependent; the sequence is KVIRRMQYFVAKKKF. The segment at 534–571 is interaction with KCNE1 C-terminus; it reads PYDVRDVIEQYSQGHLNLMVRIKELQRRLDQSIGRPAL. The interaction with AKAP9 stretch occupies residues 587–615; the sequence is IGARLNRVEDKVTQLDQRLELITDMLQQL. Residues 588–619 are C-terminal assembly domain (tetramerization); that stretch reads GARLNRVEDKVTQLDQRLELITDMLQQLLSLH. Residues 619 to 673 form a disordered region; it reads HRGGTPGSRAPGGGGAQVAQPCSGGSINPELFLPSNALPTYEQLTVPGRGPEEGS. Over residues 622 to 634 the composition is skewed to gly residues; sequence GTPGSRAPGGGGA.

This sequence belongs to the potassium channel family. KQT (TC 1.A.1.15) subfamily. Kv7.1/KCNQ1 sub-subfamily. As to quaternary structure, tetramer. Heterotetramer with KCNE1; targets to the membrane raft. Interacts (via C-terminus) with CALM; forms a heterooctameric structure (with 4:4 KCNQ1:CALM stoichiometry) in a calcium-independent manner. Interacts with AKAP9; targets protein kinase A (PKA) catalytic and regulatory subunits and protein phosphatase 1 (PP1) to the KCNQ1-KCNE1 complex, allowing PKA-mediated phosphorylation and increase of delayed rectifier potassium channel activity. Interacts with KCNE2; form a heterooligomer complex that targets to the membrane raft and leading to currents with an apparently instantaneous activation, a rapid deactivation process and a linear current-voltage relationship and decreases the amplitude of the outward current. Interacts with AP2M1; mediates estrogen-induced internalization via clathrin-coated vesicles. Interacts with NEDD4L; promotes internalization and decreases I(Ks) currents. Interacts with USP2; counteracts the NEDD4L-specific down-regulation of I(Ks) and restore plasma membrane localization. Heterotetramer with KCNQ5; has a voltage-gated potassium channel activity. Interacts with KCNE3; four KCNE3 molecules are bound to one KCNQ1 tetramer (4:4 KCNQ1:KCNE3 stoichiometry); alters membrane raft localization; affects KCNQ1 structure and gating properties. Interacts with KCNE4; impairs KCNQ1 localization in lipid rafts and inhibits voltage-gated potassium channel activity. Interacts with KCNE5; impairs KCNQ1 localization in lipid rafts and only conducts current upon strong and continued depolarization. Interacts with SLC5A3; forms coregulatory channel-transporter complexes that modulate Na(+)-coupled myo-inositol influx through the transporter. Post-translationally, ubiquitinated by NEDD4L; promotes internalization. The ubiquitinylated form is internalized through a clathrin-mediated endocytosis by interacting with AP2M1 and is recycled back to the cell membrane via RAB4A and RAB11A. In terms of processing, deubiquitinated by USP2; counteracts the NEDD4L-specific down-regulation of I(Ks) and restores the membrane localization.

The protein localises to the cell membrane. It localises to the cytoplasmic vesicle membrane. The protein resides in the early endosome. It is found in the membrane raft. Its subcellular location is the endoplasmic reticulum. The protein localises to the basolateral cell membrane. It localises to the apical cell membrane. The enzyme catalyses K(+)(in) = K(+)(out). Its activity is regulated as follows. PIP2 molecule is essential to activate KCNQ channels by inducing the coupling of the voltage-sensing domain (VSD) and the pore-forming domain (PD). Upon channel activation, PIP2 disrupts the VSD-calmodulin/CALM interactions, causing the release of CALM from the VSD which triggers the opening of the gate. Calcium potentiates KCNQ1 channel current through calcium-bound CALM. Calcium-bound CALM competes with PIP2 to stabilize the channel open state. Its function is as follows. Pore-forming subunit of the voltage-gated potassium (Kv) channel involved in the regulation of cardiomyocyte excitability and important in normal development and functions of myocardium, inner ear, stomach and colon. Associates with KCNE beta subunits that modulates current kinetics. Induces a voltage-dependent by rapidly activating and slowly deactivating potassium-selective outward current. Also promotes a delayed voltage activated potassium current showing outward rectification characteristic. During beta-adrenergic receptor stimulation participates in cardiac repolarization by associating with KCNE1 to form the I(Ks) cardiac potassium current that increases the amplitude and slows down the activation kinetics of outward potassium current I(Ks). Muscarinic agonist oxotremorine-M strongly suppresses KCNQ1/KCNE1 current. When associated with KCNE3, forms the potassium channel that is important for cyclic AMP-stimulated intestinal secretion of chloride ions. This interaction with KCNE3 is reduced by 17beta-estradiol, resulting in the reduction of currents. During conditions of increased substrate load, maintains the driving force for proximal tubular and intestinal sodium ions absorption, gastric acid secretion, and cAMP-induced jejunal chloride ions secretion. Allows the provision of potassium ions to the luminal membrane of the secretory canaliculus in the resting state as well as during stimulated acid secretion. When associated with KCNE2, forms a heterooligomer complex leading to currents with an apparently instantaneous activation, a rapid deactivation process and a linear current-voltage relationship and decreases the amplitude of the outward current. When associated with KCNE4, inhibits voltage-gated potassium channel activity. When associated with KCNE5, this complex only conducts current upon strong and continued depolarization. Also forms a heterotetramer with KCNQ5 that has a voltage-gated potassium channel activity. Binds with phosphatidylinositol 4,5-bisphosphate. KCNQ1-KCNE2 channel associates with Na(+)-coupled myo-inositol symporter in the apical membrane of choroid plexus epithelium and regulates the myo-inositol gradient between blood and cerebrospinal fluid with an impact on neuron excitability. This chain is Potassium voltage-gated channel subfamily KQT member 1, found in Sus scrofa (Pig).